Consider the following 1285-residue polypeptide: Replicase polyprotein 1TF (1285 aa).

A C4-type; atypical zinc finger spans residues 8 to 28 (CMCTPAARVFWNAGQVFCTRC). The region spanning 69-180 (ECTPSGCCWL…QPFCPFEEAH (112 aa)) is the Peptidase C31 domain. The interval 69 to 182 (ECTPSGCCWL…FCPFEEAHSS (114 aa)) is PCP1-alpha. Residues Cys-76 and His-146 each act as for Nsp1-alpha papain-like cysteine proteinase activity in the active site. Positions 269–384 (PDVFDGKCWL…IFRFGAHKWY (116 aa)) are PCP1-beta. The 117-residue stretch at 269–385 (PDVFDGKCWL…FRFGAHKWYG (117 aa)) folds into the Peptidase C32 domain. Residues Cys-276 and His-345 each act as for Nsp1-beta papain-like cysteine proteinase activity in the active site. Disordered regions lie at residues 752-797 (PSDP…DAGA) and 1050-1088 (KPVG…SRVS). The span at 775–790 (APASTTTLVREQTPDN) shows a compositional bias: polar residues. Helical transmembrane passes span 1136 to 1156 (LWLQ…CSVV), 1170 to 1190 (FLVL…LLLY), 1211 to 1231 (VMLS…AALW), and 1250 to 1270 (VISG…FLLF).

The protein localises to the host nucleus. It localises to the host cytoplasm. Its subcellular location is the host membrane. Functionally, inhibits host IFN-beta production. Plays a role in the degradation of the host transcriptional activator CREBBP protein. The degradation of host CREBBP which is a key component of the IFN enhanceosome is likely responsible for the inhibition of interferon mediated by Nsp1-alpha. Also participates in the inhibition of host NF-kappa-B activation. In terms of biological role, plays a role in the inhibition of the interferon-activated JAK/STAT signal transduction by mediating the ubiquitination and subsequent proteasomal degradation of host KPNA1. Plays a role in viral replication. The protein is Replicase polyprotein 1TF of Porcine reproductive and respiratory syndrome virus (strain Lelystad) (PRRSV).